The primary structure comprises 147 residues: Methylglyoxal synthase (147 aa).

The MGS-like domain occupies 1 to 147 (MKGQRNIGMV…TPYVKRLGAK (147 aa)). Substrate contacts are provided by residues His12, Lys16, 38 to 41 (TGTT), and 59 to 60 (SG). The Proton donor/acceptor role is filled by Asp65. Position 92 (His92) interacts with substrate.

The protein belongs to the methylglyoxal synthase family.

It carries out the reaction dihydroxyacetone phosphate = methylglyoxal + phosphate. Functionally, catalyzes the formation of methylglyoxal from dihydroxyacetone phosphate. The polypeptide is Methylglyoxal synthase (Oleidesulfovibrio alaskensis (strain ATCC BAA-1058 / DSM 17464 / G20) (Desulfovibrio alaskensis)).